The sequence spans 226 residues: MRAVVLLSGGMDSLVTTAIAAHLGYELAALHINYGQRTEKRELVAFQKICDFYRIERRLEINFEHLSLIGGSSLTDLAMPVTTAKLHSKEIPTSYVAFRNANMLSVAVSWAEVIGANKIFIGAVDEDSSGYPDCRVNFFQAFNELIKHGTKPDTRIEIQTPVISLKKWEIVIKGMELEVPFEHSWSCYKSEHVACGVCDSCALRLRAFEQAGIRDPIEYKIRPSYI.

ATP is bound at residue 7 to 17; that stretch reads LSGGMDSLVTT. 4 residues coordinate Zn(2+): cysteine 187, cysteine 195, cysteine 198, and cysteine 201.

The protein belongs to the QueC family. The cofactor is Zn(2+).

It catalyses the reaction 7-carboxy-7-deazaguanine + NH4(+) + ATP = 7-cyano-7-deazaguanine + ADP + phosphate + H2O + H(+). It functions in the pathway purine metabolism; 7-cyano-7-deazaguanine biosynthesis. In terms of biological role, catalyzes the ATP-dependent conversion of 7-carboxy-7-deazaguanine (CDG) to 7-cyano-7-deazaguanine (preQ(0)). The polypeptide is 7-cyano-7-deazaguanine synthase (Chloroherpeton thalassium (strain ATCC 35110 / GB-78)).